Here is a 97-residue protein sequence, read N- to C-terminus: Late embryogenesis abundant protein Lea5 (97 aa).

Belongs to the LEA type 3 family.

The chain is Late embryogenesis abundant protein Lea5 (LEA5) from Citrus sinensis (Sweet orange).